Reading from the N-terminus, the 186-residue chain is Elongation factor P (186 aa).

Belongs to the elongation factor P family.

It localises to the cytoplasm. Its pathway is protein biosynthesis; polypeptide chain elongation. Involved in peptide bond synthesis. Stimulates efficient translation and peptide-bond synthesis on native or reconstituted 70S ribosomes in vitro. Probably functions indirectly by altering the affinity of the ribosome for aminoacyl-tRNA, thus increasing their reactivity as acceptors for peptidyl transferase. The polypeptide is Elongation factor P (Acidobacterium capsulatum (strain ATCC 51196 / DSM 11244 / BCRC 80197 / JCM 7670 / NBRC 15755 / NCIMB 13165 / 161)).